The following is a 173-amino-acid chain: Translation initiation factor IF-3 (173 aa).

This sequence belongs to the IF-3 family. As to quaternary structure, monomer.

Its subcellular location is the cytoplasm. In terms of biological role, IF-3 binds to the 30S ribosomal subunit and shifts the equilibrium between 70S ribosomes and their 50S and 30S subunits in favor of the free subunits, thus enhancing the availability of 30S subunits on which protein synthesis initiation begins. This Caulobacter vibrioides (strain ATCC 19089 / CIP 103742 / CB 15) (Caulobacter crescentus) protein is Translation initiation factor IF-3.